A 377-amino-acid chain; its full sequence is Lipoyl synthase, mitochondrial (377 aa).

The transit peptide at Met1 to Leu77 directs the protein to the mitochondrion. Positions 107, 112, 118, 138, 142, 145, and 353 each coordinate [4Fe-4S] cluster. The Radical SAM core domain occupies Asp123–Leu342.

It belongs to the radical SAM superfamily. Lipoyl synthase family. [4Fe-4S] cluster serves as cofactor.

Its subcellular location is the mitochondrion. The enzyme catalyses [[Fe-S] cluster scaffold protein carrying a second [4Fe-4S](2+) cluster] + N(6)-octanoyl-L-lysyl-[protein] + 2 oxidized [2Fe-2S]-[ferredoxin] + 2 S-adenosyl-L-methionine + 4 H(+) = [[Fe-S] cluster scaffold protein] + N(6)-[(R)-dihydrolipoyl]-L-lysyl-[protein] + 4 Fe(3+) + 2 hydrogen sulfide + 2 5'-deoxyadenosine + 2 L-methionine + 2 reduced [2Fe-2S]-[ferredoxin]. Its pathway is protein modification; protein lipoylation via endogenous pathway; protein N(6)-(lipoyl)lysine from octanoyl-[acyl-carrier-protein]: step 2/2. Its function is as follows. Catalyzes the radical-mediated insertion of two sulfur atoms into the C-6 and C-8 positions of the octanoyl moiety bound to the lipoyl domains of lipoate-dependent enzymes, thereby converting the octanoylated domains into lipoylated derivatives. This chain is Lipoyl synthase, mitochondrial, found in Schizosaccharomyces japonicus (strain yFS275 / FY16936) (Fission yeast).